Consider the following 401-residue polypeptide: Odorant receptor 88a (401 aa).

Topologically, residues 1–26 (MKPTEIKKPYRMEEFLRPQMFQEVAQ) are cytoplasmic. Residues 27–47 (MVHFQWRRNPVDNSMVNASMV) form a helical membrane-spanning segment. Residues 48–52 (PFCLS) are Extracellular-facing. Residues 53-73 (AFLNVLFFGCNGWDIIGHFWL) traverse the membrane as a helical segment. Residues 74–142 (GHPANQNPPV…NFWQRYRFIR (69 aa)) lie on the Cytoplasmic side of the membrane. Residues 143-163 (IYSHLGGPMFCVVPLALFLLT) traverse the membrane as a helical segment. The Extracellular portion of the chain corresponds to 164 to 191 (HEGKDTPVAQHEQLLGGWLPCGVRKDPN). The chain crosses the membrane as a helical span at residues 192–212 (FYLLVWSFDLMCTTCGVSFFV). Topologically, residues 213 to 277 (TFDNLFNVMQ…LCRKYNDIFK (65 aa)) are cytoplasmic. Residues 278–298 (VAFLVSNFVGAGSLCFYLFML) form a helical membrane-spanning segment. Residues 299–303 (SETSD) lie on the Extracellular side of the membrane. A helical transmembrane segment spans residues 304–324 (VLIIAQYILPTLVLVGFTFEI). At 325–370 (CLRGTQLEKASEGLESSLRSQEWYLGSRRYRKFYLLWTQYCQRTQQ) the chain is on the cytoplasmic side. A helical transmembrane segment spans residues 371–391 (LGAFGLIQVNMVHFTEIMQLA). Residues 392-401 (YRLFTFLKSH) are Extracellular-facing.

The protein belongs to the insect chemoreceptor superfamily. Heteromeric odorant receptor channel (TC 1.A.69) family. Or49a subfamily. Interacts with Orco. Complexes exist early in the endomembrane system in olfactory sensory neurons (OSNs), coupling these complexes to the conserved ciliary trafficking pathway. In terms of tissue distribution, expressed in olfactory sensory neurons in the antenna.

Its subcellular location is the cell membrane. In terms of biological role, odorant receptor which mediates acceptance or avoidance behavior, depending on its substrates. The odorant receptor repertoire encodes a large collection of odor stimuli that vary widely in identity, intensity, and duration. May form a complex with Orco to form odorant-sensing units, providing sensitive and prolonged odorant signaling and calcium permeability. In Drosophila melanogaster (Fruit fly), this protein is Odorant receptor 88a (Or88a).